A 312-amino-acid polypeptide reads, in one-letter code: Olfactory receptor 10K2 (312 aa).

Topologically, residues 1–25 (MERVNETVVREVIFLGFSSLARLQQ) are extracellular. N-linked (GlcNAc...) asparagine glycosylation occurs at Asn-5. A helical membrane pass occupies residues 26-46 (LLFVIFLLLYLFTLGTNAIII). Topologically, residues 47-54 (STIVLDRA) are cytoplasmic. The chain crosses the membrane as a helical span at residues 55–75 (LHIPMYFFLAILSCSEICYTF). At 76 to 99 (IIVPKMLVDLLSQKKTISFLGCAI) the chain is on the extracellular side. The chain crosses the membrane as a helical span at residues 100–120 (QMFSFLFLGCSHSFLLAVMGY). Over 121–139 (DRYIAICNPLRYSVLMGHG) the chain is Cytoplasmic. A helical transmembrane segment spans residues 140–160 (VCMGLVAAACACGFTVAQIIT). Residues 161 to 197 (SLVFHLPFYSSNQLHHFFCDIAPVLKLASHHNHFSQI) are Extracellular-facing. The helical transmembrane segment at 198–217 (VIFMLCTLVLAIPLLLILVS) threads the bilayer. Residues 218-237 (YVHILSAILQFPSTLGRCKA) lie on the Cytoplasmic side of the membrane. Residues 238–258 (FSTCVSHLIIVTVHYGCASFI) traverse the membrane as a helical segment. The Extracellular portion of the chain corresponds to 259-271 (YLRPQSNYSSSQD). N-linked (GlcNAc...) asparagine glycosylation occurs at Asn-265. A helical membrane pass occupies residues 272-292 (ALISVSYTIITPLFNPMIYSL). Over 293-312 (RNKEFKSALCKIVRRTISLL) the chain is Cytoplasmic.

The protein belongs to the G-protein coupled receptor 1 family.

It localises to the cell membrane. Odorant receptor. This Homo sapiens (Human) protein is Olfactory receptor 10K2 (OR10K2).